The primary structure comprises 506 residues: Maturase K (506 aa).

Belongs to the intron maturase 2 family. MatK subfamily.

The protein localises to the plastid. It is found in the chloroplast. Its function is as follows. Usually encoded in the trnK tRNA gene intron. Probably assists in splicing its own and other chloroplast group II introns. This Lathyrus aphaca (Yellow vetchling) protein is Maturase K.